The primary structure comprises 186 residues: Centromere protein M (186 aa).

Its subcellular location is the nucleus. It is found in the chromosome. The protein resides in the centromere. Probable component of a centromeric complex involved in assembly of kinetochore proteins, mitotic progression and chromosome segregation. The sequence is that of Centromere protein M (cenpm) from Danio rerio (Zebrafish).